Consider the following 241-residue polypeptide: Small ribosomal subunit protein uS2 (241 aa).

It belongs to the universal ribosomal protein uS2 family.

The protein is Small ribosomal subunit protein uS2 of Salmonella choleraesuis (strain SC-B67).